Here is a 299-residue protein sequence, read N- to C-terminus: CCR4-NOT transcription complex subunit 9 (299 aa).

The protein belongs to the CNOT9 family. As to quaternary structure, homodimer. Component of the CCR4-NOT complex.

Its subcellular location is the nucleus. The protein localises to the cytoplasm. It is found in the P-body. Component of the CCR4-NOT complex which is one of the major cellular mRNA deadenylases and is linked to various cellular processes including bulk mRNA degradation, miRNA-mediated repression, translational repression during translational initiation and general transcription regulation. Additional complex functions may be a consequence of its influence on mRNA expression. Involved in down-regulation of MYB- and JUN-dependent transcription. Enhances ligand-dependent transcriptional activity of nuclear hormone receptors. May play a role in cell differentiation. In Xenopus tropicalis (Western clawed frog), this protein is CCR4-NOT transcription complex subunit 9.